A 533-amino-acid polypeptide reads, in one-letter code: Protein disulfide isomerase-like 1-5 (533 aa).

A signal peptide spans Met-1 to Ala-22. Thioredoxin domains follow at residues Leu-51–Thr-196 and Leu-387–Gln-516. Catalysis depends on Cys-97, which acts as the Nucleophile. Asn-151 carries N-linked (GlcNAc...) asparagine glycosylation. Active-site nucleophile residues include Cys-436 and Cys-439. A disulfide bond links Cys-436 and Cys-439. The Prevents secretion from ER motif lies at Lys-530–Leu-533.

The protein belongs to the protein disulfide isomerase family.

Its subcellular location is the endoplasmic reticulum lumen. It carries out the reaction Catalyzes the rearrangement of -S-S- bonds in proteins.. Acts as a protein-folding catalyst that interacts with nascent polypeptides to catalyze the formation, isomerization, and reduction or oxidation of disulfide bonds. May play a role in storage protein biogenesis. The polypeptide is Protein disulfide isomerase-like 1-5 (PDIL1-5) (Oryza sativa subsp. japonica (Rice)).